A 585-amino-acid chain; its full sequence is FAD-linked oxidoreductase apf9 (585 aa).

A signal peptide spans 1–19 (MKPHTVSLVLSNLASLAAA). Residues Asn40, Asn92, and Asn117 are each glycosylated (N-linked (GlcNAc...) asparagine). Residues 108–294 (IGNSPVYVVN…TEITVKTYPT (187 aa)) enclose the FAD-binding PCMH-type domain. A Pros-8alpha-FAD histidine modification is found at His145. 3 N-linked (GlcNAc...) asparagine glycosylation sites follow: Asn352, Asn412, and Asn495.

The protein belongs to the oxygen-dependent FAD-linked oxidoreductase family. Requires FAD as cofactor.

The protein operates within secondary metabolite biosynthesis. In terms of biological role, FAD-linked oxidoreductase; part of the gene cluster that mediates the biosynthesis of the cyclic tetrapeptide apicidin F (APF). The non-ribosomal peptide synthetase apf1 incorporates four different amino acids to produce apicidin F: L-phenylalanine, D-pipecolic acid (D-pip), N-methoxy-L-tryptophan and L-2-aminooctanedioic acid. L-Phenylalanine is the only proteinogenic amino acid directly used by apf1. The 3 other apf1 substrates are non-proteinogenic and have to be modified by other enzymes of the cluster. Lysine is converted to delta-1-pyrroline-5-carboxylate (P5C) which is reduced to L-pipecolic acid (L-pip) by apf3. L-pip is epimerized to D-pip, probably by apf1 activity, prior to incorporation. L-Tryptophan is N-oxidyzed by one of the cytochrome P450 monooxygenases (apf7 or apf8), and further methylated at the hydroxy group by the O-methyltransferase apf6 to yield N-methoxy-L-tryptophan. The synthesis of the fourth apf1 substrate is more complex. The fatty acid synthase apf5 is involved in the synthesis of the octanoic acid backbone of L-2-aminooctanedioic acid by fixing one acetyl-CoA unit and three malonyl-CoA units. Then one of the cytochrome P450 monooxygenases (apf7 or apf8) may oxidize this backbone to 2-oxooctanoic acid. The aminotransferase apf4 is predicted to catalyze the exchange of the keto group with an amino group. The next step would be the oxidation of 2-aminooctanoic acid by one of the cytochrome P450 monooxygenases (apf7 or apf8). The last step is the oxidation of 2-amino-8-hydroxyoctanoic acid to 2-aminooctanedioic acid is catalyzed by the FAD-dependent monooxygenase apf9. The chain is FAD-linked oxidoreductase apf9 from Gibberella fujikuroi (strain CBS 195.34 / IMI 58289 / NRRL A-6831) (Bakanae and foot rot disease fungus).